A 319-amino-acid chain; its full sequence is Serpentine receptor class X-43 (319 aa).

A run of 7 helical transmembrane segments spans residues 28 to 48 (VVSM…IGCF), 67 to 87 (AQLM…LLNI), 95 to 115 (YLFG…FLLM), 138 to 158 (IRTF…YLVV), 164 to 184 (FVFY…CGTL), 194 to 214 (TVLS…LMAF), and 267 to 287 (FFFT…VVVF).

It belongs to the G-protein coupled receptor 1 family. Expressed in ASI sensory neurons.

The protein localises to the cell membrane. It is found in the perikaryon. The protein resides in the cell projection. It localises to the cilium. Its function is as follows. Receptor for the ascaroside pheromone icas#9 which suppresses exploratory forgaging behavior. In response to ascaroside icas#9, may furthermore play a role in the expression of genes in the TGF-beta signaling pathway, such as daf-7, and in insulin signaling pathway, such as daf-28, which may in turn contribute to exploratory behavior. This chain is Serpentine receptor class X-43, found in Caenorhabditis elegans.